Here is a 430-residue protein sequence, read N- to C-terminus: Glutamate-1-semialdehyde 2,1-aminomutase (430 aa).

Lys-266 is subject to N6-(pyridoxal phosphate)lysine.

It belongs to the class-III pyridoxal-phosphate-dependent aminotransferase family. HemL subfamily. Homodimer. Pyridoxal 5'-phosphate is required as a cofactor.

The protein localises to the cytoplasm. It carries out the reaction (S)-4-amino-5-oxopentanoate = 5-aminolevulinate. It participates in porphyrin-containing compound metabolism; protoporphyrin-IX biosynthesis; 5-aminolevulinate from L-glutamyl-tRNA(Glu): step 2/2. The protein is Glutamate-1-semialdehyde 2,1-aminomutase of Acidithiobacillus ferrooxidans (strain ATCC 23270 / DSM 14882 / CIP 104768 / NCIMB 8455) (Ferrobacillus ferrooxidans (strain ATCC 23270)).